Here is a 380-residue protein sequence, read N- to C-terminus: Crotonobetainyl-CoA reductase (380 aa).

This sequence belongs to the acyl-CoA dehydrogenase family. Homotetramer. It depends on FAD as a cofactor.

It localises to the cytoplasm. The catalysed reaction is 4-(trimethylamino)butanoyl-CoA + oxidized [electron-transfer flavoprotein] + H(+) = crotonobetainyl-CoA + reduced [electron-transfer flavoprotein]. It participates in amine and polyamine metabolism; carnitine metabolism. Its function is as follows. Catalyzes the reduction of crotonobetainyl-CoA to gamma-butyrobetainyl-CoA. The sequence is that of Crotonobetainyl-CoA reductase from Proteus sp. (strain LE138).